The following is a 457-amino-acid chain: Argininosuccinate lyase (457 aa).

It belongs to the lyase 1 family. Argininosuccinate lyase subfamily.

Its subcellular location is the cytoplasm. The enzyme catalyses 2-(N(omega)-L-arginino)succinate = fumarate + L-arginine. It participates in amino-acid biosynthesis; L-arginine biosynthesis; L-arginine from L-ornithine and carbamoyl phosphate: step 3/3. The chain is Argininosuccinate lyase from Shigella flexneri serotype 5b (strain 8401).